The sequence spans 455 residues: Bifunctional protein GlmU (455 aa).

Positions 1-226 (MSLDIVILAA…AMEVQGANDR (226 aa)) are pyrophosphorylase. UDP-N-acetyl-alpha-D-glucosamine is bound by residues 8-11 (LAAG), lysine 22, glutamine 73, 78-79 (GT), 99-101 (YGD), glycine 136, glutamate 151, asparagine 166, and asparagine 224. Aspartate 101 contacts Mg(2+). Asparagine 224 is a Mg(2+) binding site. The interval 227–247 (KQLSELERHYQLREARRLMAG) is linker. An N-acetyltransferase region spans residues 248-455 (GVTLRDPARF…WKRPVKIRKD (208 aa)). UDP-N-acetyl-alpha-D-glucosamine is bound by residues arginine 330 and lysine 348. Histidine 360 serves as the catalytic Proton acceptor. UDP-N-acetyl-alpha-D-glucosamine is bound by residues tyrosine 363 and asparagine 374. Acetyl-CoA-binding positions include alanine 377, 383 to 384 (NY), serine 402, alanine 420, and arginine 437.

This sequence in the N-terminal section; belongs to the N-acetylglucosamine-1-phosphate uridyltransferase family. The protein in the C-terminal section; belongs to the transferase hexapeptide repeat family. As to quaternary structure, homotrimer. It depends on Mg(2+) as a cofactor.

The protein localises to the cytoplasm. The enzyme catalyses alpha-D-glucosamine 1-phosphate + acetyl-CoA = N-acetyl-alpha-D-glucosamine 1-phosphate + CoA + H(+). It catalyses the reaction N-acetyl-alpha-D-glucosamine 1-phosphate + UTP + H(+) = UDP-N-acetyl-alpha-D-glucosamine + diphosphate. The protein operates within nucleotide-sugar biosynthesis; UDP-N-acetyl-alpha-D-glucosamine biosynthesis; N-acetyl-alpha-D-glucosamine 1-phosphate from alpha-D-glucosamine 6-phosphate (route II): step 2/2. It functions in the pathway nucleotide-sugar biosynthesis; UDP-N-acetyl-alpha-D-glucosamine biosynthesis; UDP-N-acetyl-alpha-D-glucosamine from N-acetyl-alpha-D-glucosamine 1-phosphate: step 1/1. It participates in bacterial outer membrane biogenesis; LPS lipid A biosynthesis. In terms of biological role, catalyzes the last two sequential reactions in the de novo biosynthetic pathway for UDP-N-acetylglucosamine (UDP-GlcNAc). The C-terminal domain catalyzes the transfer of acetyl group from acetyl coenzyme A to glucosamine-1-phosphate (GlcN-1-P) to produce N-acetylglucosamine-1-phosphate (GlcNAc-1-P), which is converted into UDP-GlcNAc by the transfer of uridine 5-monophosphate (from uridine 5-triphosphate), a reaction catalyzed by the N-terminal domain. This is Bifunctional protein GlmU from Pseudomonas savastanoi pv. phaseolicola (strain 1448A / Race 6) (Pseudomonas syringae pv. phaseolicola (strain 1448A / Race 6)).